Reading from the N-terminus, the 269-residue chain is MKIGSKEFNIGERTYIMGILNFTPDSFSDGGKFNDIDVAVKHVKEMIDNGADIIDVGGESTRPGYEIVSEEEEISRVVPIIKAIKEDFDIPVSIDTYKAKVAEQAIEAGANLINDIWGFKKDKDMAKVAAKYNVPCCLMHNRDNTEYKNLMEDILNDLKECINIAKDAGVKDENIILDPGIGFGKTYEQNLEAMNNLERIKELGYPILLGTSRKSMIGLALNLPVEERIEGTVATTVIGIMKDACDFVRVHDVLENSRAAKMTDIIVRR.

One can recognise a Pterin-binding domain in the interval 14–261 (TYIMGILNFT…DVLENSRAAK (248 aa)). Position 21 (Asn21) interacts with Mg(2+). (7,8-dihydropterin-6-yl)methyl diphosphate-binding positions include Thr61, Asp95, Asn114, Asp178, Lys214, and 249–251 (RVH).

This sequence belongs to the DHPS family. Mg(2+) is required as a cofactor.

It carries out the reaction (7,8-dihydropterin-6-yl)methyl diphosphate + 4-aminobenzoate = 7,8-dihydropteroate + diphosphate. It participates in cofactor biosynthesis; tetrahydrofolate biosynthesis; 7,8-dihydrofolate from 2-amino-4-hydroxy-6-hydroxymethyl-7,8-dihydropteridine diphosphate and 4-aminobenzoate: step 1/2. Catalyzes the condensation of para-aminobenzoate (pABA) with 6-hydroxymethyl-7,8-dihydropterin diphosphate (DHPt-PP) to form 7,8-dihydropteroate (H2Pte), the immediate precursor of folate derivatives. The protein is Dihydropteroate synthase of Clostridium beijerinckii (strain ATCC 51743 / NCIMB 8052) (Clostridium acetobutylicum).